Reading from the N-terminus, the 82-residue chain is Escargot/snail protein homolog (82 aa).

C2H2-type zinc fingers lie at residues 1 to 5 (HLQFH), 18 to 40 (FSCK…IRTH), 44 to 66 (CKCD…IRTH), and 72 to 82 (FSCQHCHRAFA).

It belongs to the snail C2H2-type zinc-finger protein family.

It is found in the nucleus. This Bradysia coprophila (Dark-winged fungus gnat) protein is Escargot/snail protein homolog.